The primary structure comprises 237 residues: 2-C-methyl-D-erythritol 4-phosphate cytidylyltransferase (237 aa).

The protein belongs to the IspD/TarI cytidylyltransferase family. IspD subfamily. As to quaternary structure, homodimer.

It carries out the reaction 2-C-methyl-D-erythritol 4-phosphate + CTP + H(+) = 4-CDP-2-C-methyl-D-erythritol + diphosphate. It participates in isoprenoid biosynthesis; isopentenyl diphosphate biosynthesis via DXP pathway; isopentenyl diphosphate from 1-deoxy-D-xylulose 5-phosphate: step 2/6. Its function is as follows. Catalyzes the formation of 4-diphosphocytidyl-2-C-methyl-D-erythritol from CTP and 2-C-methyl-D-erythritol 4-phosphate (MEP). This is 2-C-methyl-D-erythritol 4-phosphate cytidylyltransferase from Pectobacterium atrosepticum (strain SCRI 1043 / ATCC BAA-672) (Erwinia carotovora subsp. atroseptica).